The sequence spans 496 residues: L-arabinose isomerase (496 aa).

Residues Glu302, Glu329, His346, and His445 each contribute to the Mn(2+) site.

It belongs to the arabinose isomerase family. Mn(2+) serves as cofactor.

The enzyme catalyses beta-L-arabinopyranose = L-ribulose. Its pathway is carbohydrate degradation; L-arabinose degradation via L-ribulose; D-xylulose 5-phosphate from L-arabinose (bacterial route): step 1/3. In terms of biological role, catalyzes the conversion of L-arabinose to L-ribulose. The sequence is that of L-arabinose isomerase from Thermotoga petrophila (strain ATCC BAA-488 / DSM 13995 / JCM 10881 / RKU-1).